Reading from the N-terminus, the 355-residue chain is Peptide chain release factor 1 (355 aa).

Glutamine 231 carries the post-translational modification N5-methylglutamine. Positions 280 to 293 (KERKAKEQSERKDQ) are enriched in basic and acidic residues. The segment at 280 to 307 (KERKAKEQSERKDQVGTGDRSGRIRTYN) is disordered.

Belongs to the prokaryotic/mitochondrial release factor family. In terms of processing, methylated by PrmC. Methylation increases the termination efficiency of RF1.

Its subcellular location is the cytoplasm. In terms of biological role, peptide chain release factor 1 directs the termination of translation in response to the peptide chain termination codons UAG and UAA. In Campylobacter hominis (strain ATCC BAA-381 / DSM 21671 / CCUG 45161 / LMG 19568 / NCTC 13146 / CH001A), this protein is Peptide chain release factor 1.